The chain runs to 139 residues: D-ribose pyranase (139 aa).

Residue His20 is the Proton donor of the active site. Residues Asp28, His106, and 128–130 (YAN) each bind substrate.

This sequence belongs to the RbsD / FucU family. RbsD subfamily. Homodecamer.

It localises to the cytoplasm. It carries out the reaction beta-D-ribopyranose = beta-D-ribofuranose. It functions in the pathway carbohydrate metabolism; D-ribose degradation; D-ribose 5-phosphate from beta-D-ribopyranose: step 1/2. Functionally, catalyzes the interconversion of beta-pyran and beta-furan forms of D-ribose. The sequence is that of D-ribose pyranase from Shewanella pealeana (strain ATCC 700345 / ANG-SQ1).